The primary structure comprises 395 residues: Argininosuccinate synthase (395 aa).

ATP-binding positions include 9–17 and A37; that span reads AYSGGLDTS. Y87 and S92 together coordinate L-citrulline. G117 is a binding site for ATP. Residues T119, N123, and D124 each coordinate L-aspartate. Position 123 (N123) interacts with L-citrulline. L-citrulline is bound by residues R127, S173, S182, E258, and Y270.

This sequence belongs to the argininosuccinate synthase family. Type 1 subfamily. In terms of assembly, homotetramer.

It localises to the cytoplasm. The enzyme catalyses L-citrulline + L-aspartate + ATP = 2-(N(omega)-L-arginino)succinate + AMP + diphosphate + H(+). The protein operates within amino-acid biosynthesis; L-arginine biosynthesis; L-arginine from L-ornithine and carbamoyl phosphate: step 2/3. This is Argininosuccinate synthase from Methanospirillum hungatei JF-1 (strain ATCC 27890 / DSM 864 / NBRC 100397 / JF-1).